The primary structure comprises 2150 residues: Genome polyprotein (2150 aa).

Residue Gly-2 is the site of N-myristoyl glycine; by host attachment. The Cytoplasmic segment spans residues 2 to 1463 (GAQVSRQNVG…ELNLANTIIT (1462 aa)). An amphipathic alpha-helix region spans residues 565–581 (IAQNPVENYIDEVLNEV). Residues 592–611 (PTTSNSAPALDAAETGHTSS) form a disordered region. Active-site for protease 2A activity residues include His-868 and Asp-885. Zn(2+) is bound by residues Cys-902 and Cys-904. Residue Cys-956 is the For protease 2A activity of the active site. Zn(2+) contacts are provided by Cys-962 and His-964. Residues 1088–1157 (SDSWLKKFTE…SLRVADMKTQ (70 aa)) form a membrane-binding region. The segment at 1088–1221 (SDSWLKKFTE…PPGAGKSITT (134 aa)) is oligomerization. The segment at 1109-1113 (GNKIS) is RNA-binding. One can recognise an SF3 helicase domain in the interval 1181 to 1343 (EAKRIKTLYI…FKDPQGKLNV (163 aa)). 3 residues coordinate Zn(2+): Cys-1350, Cys-1361, and Cys-1366. The segment at 1350–1366 (CDVDNRIGNARCCPFVC) adopts a C4-type; degenerate zinc-finger fold. The segment at 1393-1400 (EDRRRRQV) is RNA-binding. The segment at 1404–1409 (MTAIFQ) is oligomerization. An intramembrane segment occupies 1464 to 1479 (IIANVIGMARIIYVIY). Over 1480–2150 (KLFCTLQGPY…LLLHEWYEKF (671 aa)) the chain is Cytoplasmic. The residue at position 1489 (Tyr-1489) is an O-(5'-phospho-RNA)-tyrosine. Residues 1508–1686 (GPEEEFGMSL…FSAMLLRSYF (179 aa)) form the Peptidase C3 domain. Residues His-1547, Glu-1578, and Cys-1654 each act as for protease 3C activity in the active site. The 114-residue stretch at 1918-2031 (KCIMAFDYTN…SYIHELDMEA (114 aa)) folds into the RdRp catalytic domain. Asp-1924 and Asp-2017 together coordinate Mg(2+).

It belongs to the picornaviruses polyprotein family. In terms of assembly, interacts with capsid protein VP1 and capsid protein VP3 to form heterotrimeric protomers. Interacts with capsid protein VP0, and capsid protein VP3 to form heterotrimeric protomers. Five protomers subsequently associate to form pentamers which serve as building blocks for the capsid. Interacts with capsid protein VP2, capsid protein VP3 and capsid protein VP4 following cleavage of capsid protein VP0. As to quaternary structure, interacts with capsid protein VP1 and capsid protein VP3 in the mature capsid. In terms of assembly, interacts with capsid protein VP0 and capsid protein VP1 to form heterotrimeric protomers. Five protomers subsequently associate to form pentamers which serve as building blocks for the capsid. Interacts with capsid protein VP4 in the mature capsid. Interacts with protein 2C; this interaction may be important for virion morphogenesis. Interacts with capsid protein VP1 and capsid protein VP3. As to quaternary structure, homodimer. In terms of assembly, homohexamer; forms a hexameric ring structure with 6-fold symmetry characteristic of AAA+ ATPases. Interacts (via N-terminus) with host RTN3 (via reticulon domain); this interaction is important for viral replication. Interacts with capsid protein VP3; this interaction may be important for virion morphogenesis. Interacts with protein 3CD. As to quaternary structure, homodimer. Interacts with host GBF1. Interacts (via GOLD domain) with host ACBD3 (via GOLD domain); this interaction allows the formation of a viral protein 3A/ACBD3 heterotetramer with a 2:2 stoichiometry, which will stimulate the recruitment of host PI4KB in order to synthesize PI4P at the viral RNA replication sites. In terms of assembly, interacts with RNA-directed RNA polymerase. Interacts with protein 3AB and with RNA-directed RNA polymerase. As to quaternary structure, interacts with Viral protein genome-linked and with protein 3CD. Mg(2+) serves as cofactor. In terms of processing, specific enzymatic cleavages in vivo by the viral proteases yield processing intermediates and the mature proteins. Myristoylation is required for the formation of pentamers during virus assembly. Further assembly of 12 pentamers and a molecule of genomic RNA generates the provirion. Post-translationally, during virion maturation, immature virions are rendered infectious following cleavage of VP0 into VP4 and VP2. This maturation seems to be an autocatalytic event triggered by the presence of RNA in the capsid and it is followed by a conformational change infectious virion. In terms of processing, myristoylation is required during RNA encapsidation and formation of the mature virus particle. VPg is uridylylated by the polymerase into VPg-pUpU. This acts as a nucleotide-peptide primer for the genomic RNA replication.

It localises to the virion. It is found in the host cytoplasm. Its subcellular location is the host cytoplasmic vesicle membrane. The protein localises to the host nucleus. It carries out the reaction a ribonucleoside 5'-triphosphate + H2O = a ribonucleoside 5'-diphosphate + phosphate + H(+). The enzyme catalyses Selective cleavage of Tyr-|-Gly bond in the picornavirus polyprotein.. The catalysed reaction is RNA(n) + a ribonucleoside 5'-triphosphate = RNA(n+1) + diphosphate. It catalyses the reaction Selective cleavage of Gln-|-Gly bond in the poliovirus polyprotein. In other picornavirus reactions Glu may be substituted for Gln, and Ser or Thr for Gly.. With respect to regulation, replication or transcription is subject to high level of random mutations by the nucleotide analog ribavirin. Its function is as follows. Forms an icosahedral capsid of pseudo T=3 symmetry with capsid proteins VP2 and VP3. The capsid is 300 Angstroms in diameter, composed of 60 copies of each capsid protein and enclosing the viral positive strand RNA genome. Capsid protein VP1 mainly forms the vertices of the capsid. Capsid protein VP1 interacts with host cell receptor to provide virion attachment to target host cells. This attachment induces virion internalization. Tyrosine kinases are probably involved in the entry process. After binding to its receptor, the capsid undergoes conformational changes. Capsid protein VP1 N-terminus (that contains an amphipathic alpha-helix) and capsid protein VP4 are externalized. Together, they shape a pore in the host membrane through which viral genome is translocated to host cell cytoplasm. Forms an icosahedral capsid of pseudo T=3 symmetry with capsid proteins VP2 and VP3. The capsid is 300 Angstroms in diameter, composed of 60 copies of each capsid protein and enclosing the viral positive strand RNA genome. Functionally, lies on the inner surface of the capsid shell. After binding to the host receptor, the capsid undergoes conformational changes. Capsid protein VP4 is released, Capsid protein VP1 N-terminus is externalized, and together, they shape a pore in the host membrane through which the viral genome is translocated into the host cell cytoplasm. In terms of biological role, component of immature procapsids, which is cleaved into capsid proteins VP4 and VP2 after maturation. Allows the capsid to remain inactive before the maturation step. Its function is as follows. Cysteine protease that cleaves viral polyprotein and specific host proteins. It is responsible for the autocatalytic cleavage between the P1 and P2 regions, which is the first cleavage occurring in the polyprotein. Also cleaves the host translation initiation factor EIF4G1, in order to shut down the capped cellular mRNA translation. Inhibits the host nucleus-cytoplasm protein and RNA trafficking by cleaving host members of the nuclear pores. Counteracts stress granule formation probably by antagonizing its assembly or promoting its dissassembly. Plays an essential role in the virus replication cycle by acting as a viroporin. Creates a pore in the host endoplasmic reticulum and as a consequence releases Ca2+ in the cytoplasm of infected cell. In turn, high levels of cytoplasmic calcium may trigger membrane trafficking and transport of viral ER-associated proteins to viroplasms, sites of viral genome replication. Functionally, induces and associates with structural rearrangements of intracellular membranes. Displays RNA-binding, nucleotide binding and NTPase activities. May play a role in virion morphogenesis and viral RNA encapsidation by interacting with the capsid protein VP3. In terms of biological role, localizes the viral replication complex to the surface of membranous vesicles. Together with protein 3CD binds the Cis-Active RNA Element (CRE) which is involved in RNA synthesis initiation. Acts as a cofactor to stimulate the activity of 3D polymerase, maybe through a nucleid acid chaperone activity. Its function is as follows. Localizes the viral replication complex to the surface of membranous vesicles. It inhibits host cell endoplasmic reticulum-to-Golgi apparatus transport and causes the disassembly of the Golgi complex, possibly through GBF1 interaction. This would result in depletion of MHC, trail receptors and IFN receptors at the host cell surface. Plays an essential role in viral RNA replication by recruiting ACBD3 and PI4KB at the viral replication sites, thereby allowing the formation of the rearranged membranous structures where viral replication takes place. Acts as a primer for viral RNA replication and remains covalently bound to viral genomic RNA. VPg is uridylylated prior to priming replication into VPg-pUpU. The oriI viral genomic sequence may act as a template for this. The VPg-pUpU is then used as primer on the genomic RNA poly(A) by the RNA-dependent RNA polymerase to replicate the viral genome. During genome replication, the VPg-RNA linkage is removed by the host TDP2, thereby accelerating replication. During the late stage of the replication cycle, host TDP2 is excluded from sites of viral RNA synthesis and encapsidation, allowing for the generation of progeny virions. Functionally, involved in the viral replication complex and viral polypeptide maturation. It exhibits protease activity with a specificity and catalytic efficiency that is different from protease 3C. Protein 3CD lacks polymerase activity. Protein 3CD binds to the 5'UTR of the viral genome. In terms of biological role, replicates the viral genomic RNA on the surface of intracellular membranes. May form linear arrays of subunits that propagate along a strong head-to-tail interaction called interface-I. Covalently attaches UMP to a tyrosine of VPg, which is used to prime RNA synthesis. The positive stranded RNA genome is first replicated at virus induced membranous vesicles, creating a dsRNA genomic replication form. This dsRNA is then used as template to synthesize positive stranded RNA genomes. ss(+)RNA genomes are either translated, replicated or encapsidated. Its function is as follows. Major viral protease that mediates proteolytic processing of the polyprotein. Cleaves host EIF5B, contributing to host translation shutoff. Also cleaves host PABPC1, contributing to host translation shutoff. Cleaves host NLRP1, triggers host N-glycine-mediated degradation of the autoinhibitory NLRP1 N-terminal fragment. This is Genome polyprotein from Homo sapiens (Human).